The following is a 501-amino-acid chain: Nucleic-acid-binding protein from transposon X-element (501 aa).

2 disordered regions span residues 20–71 (SSPQ…GNSN) and 105–128 (AAAK…SKPP). The CCHC-type zinc finger occupies 285-302 (VQCHRCQQIGHTAKYCRK). Disordered regions lie at residues 353-385 (RPRS…SRGG) and 400-443 (QPMS…TDAS). Positions 407-422 (QQQKQKQQPYDGSPSR) are enriched in low complexity. Polar residues predominate over residues 434–443 (GTLQRSTDAS).

Its subcellular location is the virion. Functionally, strongly basic protein that binds directly to retroviral RNA and may be involved in its packaging and in the reverse transcription process. This Drosophila melanogaster (Fruit fly) protein is Nucleic-acid-binding protein from transposon X-element.